Consider the following 707-residue polypeptide: Complement C1r-A subcomponent (707 aa).

Residues 1–16 (MWLFALLVTLFYGVEG) form the signal peptide. The region spanning 17–140 (SIYLPQKLYG…KGFLAYYQAV (124 aa)) is the CUB 1 domain. The Ca(2+) site is built by E65, D73, and D118. C70 and C88 are disulfide-bonded. N124 carries an N-linked (GlcNAc...) asparagine glycan. Residues D141, L142, and E144 each contribute to the Ca(2+) site. The EGF-like; calcium-binding domain occupies 141–189 (DLDECASQPNSVEEGLQPRCQHLCHNYVGGYFCSCHPGYELQKDGQSCQ). Disulfide bonds link C145-C164, C160-C173, C175-C188, and C192-C219. Residues N166, Y167, and G170 each coordinate Ca(2+). (3R)-3-hydroxyasparagine is present on N166. One can recognise a CUB 2 domain in the interval 192–304 (CSSELYTEPS…RGWKLHYTTE (113 aa)). A Phosphoserine; by CK2 modification is found at S205. N220 carries an N-linked (GlcNAc...) asparagine glycan. Residues D242, D252, D289, and D293 each contribute to the Ca(2+) site. A disulfide bridge links C249 with C267. 2 consecutive Sushi domains span residues 306–372 (IKCP…RCKI) and 373–448 (KNCG…RCLP). 5 cysteine pairs are disulfide-bonded: C308/C357, C337/C370, C375/C428, C405/C446, and C450/C579. The Peptidase S1 domain maps to 463–704 (IIRGQPARPG…YVDWIKKEMG (242 aa)). Catalysis depends on charge relay system residues H501 and D559. The N-linked (GlcNAc...) asparagine glycan is linked to N583. Cystine bridges form between C622–C641 and C652–C682. The active-site Charge relay system is S656.

Belongs to the peptidase S1 family. Core component of the complement C1 complex, a calcium-dependent complex composed of 1 molecule of the C1Q subcomplex, 2 molecules of C1R and 2 molecules of C1S. The C1Q subcomplex is composed 18 subunits: 3 chains of C1QA, C1QB, and C1QC trimerize to form 6 collagen-like triple helices connected to six globular ligand-recognition modules. Within the C1 complex, C1R is a dimer of identical chains, each of which is activated by cleavage into two chains, heavy and light, connected by disulfide bonds. Post-translationally, cleaved and activated by autocatalytic processing to generate Complement C1r subcomponent heavy and light chains that are connected by disulfide bonds. In terms of processing, the iron and 2-oxoglutarate dependent 3-hydroxylation of aspartate and asparagine is (R) stereospecific within EGF domains.

It is found in the secreted. Its subcellular location is the cell surface. The catalysed reaction is Selective cleavage of Lys(or Arg)-|-Ile bond in complement subcomponent C1s to form the active form of C1s (EC 3.4.21.42).. Its activity is regulated as follows. Activated by the C1Q subcomplex of the C1 complex following C1Q binding to immunoglobulins (IgG or IgM) complexed with antigens to form antigen-antibody complexes on the surface of pathogens. Immunoglobulin-binding promotes autoactivation of C1R, which results in the cleavage of the Arg-Ile bond in the catalytic domain. Serine protease component of the complement C1 complex, a multiprotein complex that initiates the classical pathway of the complement system, a cascade of proteins that leads to phagocytosis and breakdown of pathogens and signaling that strengthens the adaptive immune system. C1R catalyzes the first enzymatic step in the classical complement pathway: it is activated by the C1Q subcomplex of the C1 complex, which associates with IgG or IgM immunoglobulins complexed with antigens to form antigen-antibody complexes on the surface of pathogens. Immunoglobulin-binding promotes the autocatalytic cleavage and activation of C1R. Activated C1R then cleaves and activates C1S, the second protease of the classical complement pathway. It is unclear if C1R activates C1S within single, strained C1 complexes or between neighboring C1 complexes on surfaces. This chain is Complement C1r-A subcomponent (C1ra), found in Mus musculus (Mouse).